A 104-amino-acid chain; its full sequence is UPF0213 protein YsiG (104 aa).

The GIY-YIG domain occupies 2–79 (NQYFTYILQC…KLVRKQKLSL (78 aa)).

The protein belongs to the UPF0213 family.

The polypeptide is UPF0213 protein YsiG (ysiG) (Lactococcus lactis subsp. lactis (strain IL1403) (Streptococcus lactis)).